The chain runs to 566 residues: Serine/threonine-protein kinase PknE (566 aa).

Topologically, residues 1 to 337 (MDGTAESREG…PLPRSARQPW (337 aa)) are cytoplasmic. Ser-7 bears the Phosphoserine; by autocatalysis mark. Thr-11 carries the phosphothreonine; by autocatalysis modification. The Protein kinase domain occupies 16–275 (YRLRRLVGRG…DLSAAAHAAL (260 aa)). Residues 22-30 (VGRGGMGDV) and Lys-45 each bind ATP. A phosphothreonine; by autocatalysis mark is found at Thr-50 and Thr-59. Residue Asp-139 is the Proton acceptor of the active site. Phosphothreonine; by autocatalysis is present on residues Thr-170, Thr-175, and Thr-178. The interval 296 to 330 (PVPSTHPVSPGTRWPQPTPWAGGAPPWGPPSSPLP) is disordered. A helical membrane pass occupies residues 338-358 (LWVGVAVAVVVALAGGLGIAL). The Extracellular portion of the chain corresponds to 359–566 (AHPWRSSGPR…DPSWLARLIG (208 aa)).

It belongs to the protein kinase superfamily. Ser/Thr protein kinase family. As to quaternary structure, homodimer. In terms of processing, autophosphorylated on serine and threonine residues. Dephosphorylated by PstP.

It localises to the cell membrane. The enzyme catalyses L-seryl-[protein] + ATP = O-phospho-L-seryl-[protein] + ADP + H(+). It carries out the reaction L-threonyl-[protein] + ATP = O-phospho-L-threonyl-[protein] + ADP + H(+). A serine/threonine-protein kinase, acts on HupB in vitro, modifying at least 2 Ser and 8 Thr residues. Important for bacterial survival in the host during infection. The sequence is that of Serine/threonine-protein kinase PknE from Mycobacterium tuberculosis (strain ATCC 25177 / H37Ra).